The primary structure comprises 354 residues: UPF0496 protein At4g34330 (354 aa).

The next 2 helical transmembrane spans lie at 200–220 (IIFM…ATMA) and 222–242 (PHVA…GKWI). The stretch at 270–341 (AVQDLNNIKD…CSTDIRRART (72 aa)) forms a coiled coil.

The protein belongs to the UPF0496 family.

Its subcellular location is the membrane. The chain is UPF0496 protein At4g34330 from Arabidopsis thaliana (Mouse-ear cress).